Here is a 2049-residue protein sequence, read N- to C-terminus: Non-reducing polyketide synthase hmp3 (2049 aa).

The interval 9–246 is N-terminal acylcarrier protein transacylase (SAT) domain; the sequence is LYFGDQTDSW…NELSIHALQH (238 aa). Residues 365–793 form the Ketosynthase family 3 (KS3) domain; that stretch reads PGRIAIVGMA…GGNASLILED (429 aa). Active-site for beta-ketoacyl synthase activity residues include cysteine 538, histidine 673, and histidine 712. Residues 887 to 1146 form a malonyl-CoA:ACP transacylase (MAT) domain region; it reads VFVFTGQGSH…VDFVGALGAL (260 aa). Serine 978 serves as the catalytic For acyl/malonyl transferase activity. Residues 1265–1404 form an N-terminal hotdog fold region; the sequence is QQIVEESSSP…AQTLQTSWNR (140 aa). Residues 1265–1573 enclose the PKS/mFAS DH domain; sequence QQIVEESSSP…FHEVSNNVLD (309 aa). A product template (PT) domain region spans residues 1269–1572; it reads EESSSPSLHV…SFHEVSNNVL (304 aa). The segment at 1425-1573 is C-terminal hotdog fold; the sequence is GHRMLPSILY…FHEVSNNVLD (149 aa). The Carrier domain maps to 1626 to 1704; sequence SSESELFHTI…DLRNEFARSS (79 aa). O-(pantetheine 4'-phosphoryl)serine is present on serine 1663. The tract at residues 1700 to 1747 is disordered; sequence FARSSTSTPPSKTFSEFSIVDATPESTRSSSRAPSEKKEPAPASEKSE. The segment covering 1703–1717 has biased composition (low complexity); it reads SSTSTPPSKTFSEFS. The segment covering 1723-1732 has biased composition (polar residues); that stretch reads PESTRSSSRA. The segment covering 1733–1747 has biased composition (basic and acidic residues); the sequence is PSEKKEPAPASEKSE. The interval 1761–1951 is thioesterase (TE) domain; that stretch reads SPLPSARITL…KRTAIIWAKK (191 aa).

The protein operates within secondary metabolite biosynthesis. Non-reducing polyketide synthase; part of the gene cluster that mediates the biosynthesis of hypothemycin, a resorcylic acid lactone (RAL) that irreversibly inhibits a subset of protein kinases with a conserved cysteine in the ATP binding site such as human ERK2. The first step is performed by both PKSs hmp3 and hmp8 and leads to the production of 7',8'-dehydrozearalenol (DHZ). The highly reducing PKS hpm8 synthesizes the reduced hexaketide (7S,11S,2E,8E)-7,11-dihydroxy-dodeca-2,8-dienoate, which is transferred downstream to the non-reducing PKS hpm3. Hpm3 then extends the reduced hexaketide to a nonaketide, after which regioselective cyclization and macrolactonization affords DHZ. The next step is the conversion of DHZ into aigialomycin C and is performed by the O-methyltransferase hmp5, the FAD-binding monooxygenase hmp7, and the cytochrome P450 monooxygenase hmp1. The wide substrate tolerance of the hmp5 and hmp7 implies that the reactions from DHZ to aigialomycin C can occur in any order. The steps from aigialomycin C to hypothemycin are less well established. The FAD-linked oxidoreductase hmp9 presumably catalyzes oxidation of the C-6' hydroxyl to a ketone. The timing of this oxidation is important, since the resulting enone functional group is a Michael acceptor that can react spontaneously with glutathione, an abundant metabolite in fungal cells. The glutathione S-transferase hmp2 catalyzes cis-trans isomerization of the 7',8' double bond with equilibrium favoring the trans isomer. The hpm6-encoded transporter might preferentially pump hypothemycin out of the cell relative to the trans isomer aigialomycin A. The cis-to-trans isomerization may be coupled with C-4' hydroxylation, since all known hypothemycin analogs containing the enone functional group also have hydroxyl groups at both C-4' and C-5'. This is Non-reducing polyketide synthase hmp3 from Hypomyces subiculosus (Nectria subiculosa).